We begin with the raw amino-acid sequence, 297 residues long: Putative lipid kinase MamU (297 aa).

The 89-residue stretch at 43 to 131 folds into the DAGKc domain; the sequence is EGKDMGRMVR…MDVGRVNDRY (89 aa). Residue 68 to 74 participates in ATP binding; that stretch reads GDGSLSR. Residue Glu-274 is the Proton acceptor of the active site.

The protein belongs to the diacylglycerol/lipid kinase family.

It is found in the cytoplasm. In terms of biological role, might phosphorylate lipids. This is Putative lipid kinase MamU from Magnetospirillum gryphiswaldense (strain DSM 6361 / JCM 21280 / NBRC 15271 / MSR-1).